We begin with the raw amino-acid sequence, 368 residues long: MCAKKEEEEEEEEDSSEAMNNIQNYQNDLFFHQLISHHHHHHHDPSQSETLGASGNVGSGFTIFSQDSVSPIWSLPPPTSIQPPFDQFPPPSSSPASFYGSFFNRSRAHHQGLQFGYEGFGGATSAAHHHHEQLRILSEALGPVVQAGSGPFGLQAELGKMTAQEIMDAKALAASKSHSEAERRRRERINNHLAKLRSILPNTTKTDKASLLAEVIQHVKELKRETSVISETNLVPTESDELTVAFTEEEETGDGRFVIKASLCCEDRSDLLPDMIKTLKAMRLKTLKAEITTVGGRVKNVLFVTGEESSGEEVEEEYCIGTIEEALKAVMEKSNVEESSSSGNAKRQRMSSHNTITIVEQQQQYNQR.

A coiled-coil region spans residues 3–30 (AKKEEEEEEEEDSSEAMNNIQNYQNDLF). Positions 173 to 222 (AASKSHSEAERRRRERINNHLAKLRSILPNTTKTDKASLLAEVIQHVKEL) constitute a bHLH domain. Residues 333–368 (KSNVEESSSSGNAKRQRMSSHNTITIVEQQQQYNQR) form a disordered region. Residues 337–368 (EESSSSGNAKRQRMSSHNTITIVEQQQQYNQR) are compositionally biased toward polar residues.

In terms of assembly, homodimer. Interacts with LHW.

Its subcellular location is the nucleus. The polypeptide is Transcription factor bHLH30 (BHLH30) (Arabidopsis thaliana (Mouse-ear cress)).